Reading from the N-terminus, the 558-residue chain is Dihydroxy-acid dehydratase (558 aa).

A Mg(2+)-binding site is contributed by D78. Position 119 (C119) interacts with [2Fe-2S] cluster. Positions 120 and 121 each coordinate Mg(2+). N6-carboxylysine is present on K121. A [2Fe-2S] cluster-binding site is contributed by C192. E445 is a Mg(2+) binding site. S471 acts as the Proton acceptor in catalysis.

The protein belongs to the IlvD/Edd family. In terms of assembly, homodimer. The cofactor is [2Fe-2S] cluster. Mg(2+) serves as cofactor.

It catalyses the reaction (2R)-2,3-dihydroxy-3-methylbutanoate = 3-methyl-2-oxobutanoate + H2O. It carries out the reaction (2R,3R)-2,3-dihydroxy-3-methylpentanoate = (S)-3-methyl-2-oxopentanoate + H2O. It functions in the pathway amino-acid biosynthesis; L-isoleucine biosynthesis; L-isoleucine from 2-oxobutanoate: step 3/4. The protein operates within amino-acid biosynthesis; L-valine biosynthesis; L-valine from pyruvate: step 3/4. Its function is as follows. Functions in the biosynthesis of branched-chain amino acids. Catalyzes the dehydration of (2R,3R)-2,3-dihydroxy-3-methylpentanoate (2,3-dihydroxy-3-methylvalerate) into 2-oxo-3-methylpentanoate (2-oxo-3-methylvalerate) and of (2R)-2,3-dihydroxy-3-methylbutanoate (2,3-dihydroxyisovalerate) into 2-oxo-3-methylbutanoate (2-oxoisovalerate), the penultimate precursor to L-isoleucine and L-valine, respectively. The sequence is that of Dihydroxy-acid dehydratase from Akkermansia muciniphila (strain ATCC BAA-835 / DSM 22959 / JCM 33894 / BCRC 81048 / CCUG 64013 / CIP 107961 / Muc).